A 409-amino-acid polypeptide reads, in one-letter code: Outer membrane protein assembly factor BamB (409 aa).

An N-terminal signal peptide occupies residues 1-34 (MAGNILLLILDYVFHAGSRTLRVCILSLLILLSG). Cys35 carries N-palmitoyl cysteine lipidation. Cys35 carries the S-diacylglycerol cysteine lipid modification.

This sequence belongs to the BamB family. In terms of assembly, part of the Bam complex.

The protein resides in the cell outer membrane. In terms of biological role, part of the outer membrane protein assembly complex, which is involved in assembly and insertion of beta-barrel proteins into the outer membrane. The sequence is that of Outer membrane protein assembly factor BamB from Nitrosomonas eutropha (strain DSM 101675 / C91 / Nm57).